A 583-amino-acid chain; its full sequence is Radixin (583 aa).

An FERM domain is found at 5-295 (INVRVTTMDA…GNHELYMRRR (291 aa)). 60–63 (KLNK) is an a 1,2-diacyl-sn-glycero-3-phospho-(1D-myo-inositol) binding site. At Lys-83 the chain carries N6-succinyllysine. Lys-278 contributes to the a 1,2-diacyl-sn-glycero-3-phospho-(1D-myo-inositol) binding site. Disordered stretches follow at residues 310 to 336 (REEK…AEKE), 374 to 407 (ELDQ…AKQA), and 458 to 526 (KTKE…RVNK). Basic and acidic residues predominate over residues 374-400 (ELDQERKRAKEEAERLEKERRAAEEAK). Positions 469–480 (APPPPPPPPVVP) are enriched in pro residues. 2 stretches are compositionally biased toward basic and acidic residues: residues 483 to 492 (ENEHDEHDEN) and 506 to 525 (MNHR…ERVN). Position 564 is a phosphothreonine; by ROCK2 (Thr-564).

As to quaternary structure, interacts with CPNE1 (via VWFA domain) and CPNE4 (via VWFA domain). Binds NHERF1. Interacts with NHERF1, NHERF2, LAYN, MME/NEP and ICAM2. Interacts (via FERM domain) with SPN/CD43 cytoplasmic tail. Interacts with CD44. Interacts with CLIC5; may work together in a complex which also includes EZR and MYO6 to stabilize linkages between the plasma membrane and subjacent actin cytoskeleton at the base of stereocilia. In terms of processing, phosphorylated by tyrosine-protein kinases. Phosphorylation by ROCK2 suppresses the head-to-tail association of the N-terminal and C-terminal halves resulting in an opened conformation which is capable of actin and membrane-binding.

It localises to the cell membrane. Its subcellular location is the cytoplasm. It is found in the cytoskeleton. The protein localises to the cleavage furrow. The protein resides in the cell projection. It localises to the microvillus. Its subcellular location is the stereocilium. Its activity is regulated as follows. A head-to-tail association, of the N-terminal and C-terminal halves results in a closed conformation (inactive form) which is incapable of actin or membrane-binding. In terms of biological role, probably plays a crucial role in the binding of the barbed end of actin filaments to the plasma membrane. The chain is Radixin (RDX) from Sus scrofa (Pig).